A 120-amino-acid chain; its full sequence is Chaperonin GroEL (120 aa).

Residue 23 to 27 (DGTTT) participates in ATP binding.

It belongs to the chaperonin (HSP60) family. In terms of assembly, forms a cylinder of 14 subunits composed of two heptameric rings stacked back-to-back. Interacts with the co-chaperonin GroES.

It is found in the cytoplasm. It carries out the reaction ATP + H2O + a folded polypeptide = ADP + phosphate + an unfolded polypeptide.. In terms of biological role, together with its co-chaperonin GroES, plays an essential role in assisting protein folding. The GroEL-GroES system forms a nano-cage that allows encapsulation of the non-native substrate proteins and provides a physical environment optimized to promote and accelerate protein folding. In Mycobacterium intracellulare, this protein is Chaperonin GroEL.